The chain runs to 200 residues: Large ribosomal subunit protein uL4 (200 aa).

A disordered region spans residues 38 to 65 (GRQGSKAQKTRSEVSGGGKKPWRQKGTG).

It belongs to the universal ribosomal protein uL4 family. Part of the 50S ribosomal subunit.

Its function is as follows. One of the primary rRNA binding proteins, this protein initially binds near the 5'-end of the 23S rRNA. It is important during the early stages of 50S assembly. It makes multiple contacts with different domains of the 23S rRNA in the assembled 50S subunit and ribosome. Functionally, forms part of the polypeptide exit tunnel. This Pseudomonas aeruginosa (strain LESB58) protein is Large ribosomal subunit protein uL4.